A 197-amino-acid chain; its full sequence is RNA-binding protein with multiple splicing (197 aa).

An N-acetylmethionine modification is found at M1. Position 12 is a phosphothreonine (T12). Residues 24–101 form the RRM domain; the sequence is RTLFVSGLPL…QTLRLEFAKA (78 aa). An interaction with RNA region spans residues 98–105; sequence FAKANTKM. Phosphothreonine is present on T113.

In terms of assembly, homodimer; each protein chain binds one RNA molecule via the external surface of the homodimer. Interacts with RNA binding proteins MBNL1, RBFOX2, RBM4 and RBM14; the interaction allows cooperative assembly of stable cell-specific alternative splicing regulatory complexes. Also interacts with RBM47, MATR3 and ESRP2. Interacts with SMAD2, SMAD3 and SMAD4; the interactions are direct. As to expression, mRNA expressed in developing heart, with significantly higher expression in the atria relative to the ventricles.

The protein localises to the nucleus. Its subcellular location is the cytoplasm. The protein resides in the stress granule. It localises to the P-body. RNA binding protein that mediates the regulation of pre-mRNA alternative splicing (AS). Acts either as activator (FLNB, HSPG2, LIPA1, MYOCD, PTPRF and PPFIBP1) or repressor (TPM1, ACTN1, ITGA7, PIEZO1, LSM14B, MBNL1 and MBML2) of splicing events on specific pre-mRNA targets. Together with RNA binding proteins RBFOX2 and MBNL1/2, activates a splicing program associated with differentiated contractile vascular smooth muscle cells (SMC) by regulating AS of numerous pre-mRNA involved in actin cytoskeleton and focal adhesion machineries, suggesting a role in promoting a cell differentiated state. Binds to introns, exons and 3'-UTR associated with tandem CAC trinucleotide motifs separated by a variable spacer region, at a minimum as a dimer. The minimal length of RNA required for RBPMS-binding tandem CAC motifs is 15 nt, with spacing ranging from 1 to 9 nt. Can also bind to CA dinucleotide repeats. Mediates repression of TPM1 exon 3 by binding to CAC tandem repeats in the flanking intronic regions, followed by higher-order oligomerization and heterotypic interactions with other splicing regulators including MBNL1 and RBFOX2, which prevents assembly of ATP-dependent splicing complexes. In Mus musculus (Mouse), this protein is RNA-binding protein with multiple splicing.